Reading from the N-terminus, the 366-residue chain is tRNA(Met) cytidine acetate ligase (366 aa).

ATP contacts are provided by residues Val7 to Leu20, Gly96, Asn152, and Arg175.

It belongs to the TmcAL family.

The protein localises to the cytoplasm. It catalyses the reaction cytidine(34) in elongator tRNA(Met) + acetate + ATP = N(4)-acetylcytidine(34) in elongator tRNA(Met) + AMP + diphosphate. Catalyzes the formation of N(4)-acetylcytidine (ac(4)C) at the wobble position of elongator tRNA(Met), using acetate and ATP as substrates. First activates an acetate ion to form acetyladenylate (Ac-AMP) and then transfers the acetyl group to tRNA to form ac(4)C34. In Streptococcus uberis (strain ATCC BAA-854 / 0140J), this protein is tRNA(Met) cytidine acetate ligase.